The following is a 250-amino-acid chain: CCN family member 5 (250 aa).

A signal peptide spans 1 to 23 (MRGSPLIRLLATSFLCLLSMVCA). Disulfide bonds link C22/C50, C26/C52, C32/C53, C39/C56, C64/C78, and C70/C100. One can recognise an IGFBP N-terminal domain in the interval 24–103 (QLCRTPCTCP…DEDDGDCEVN (80 aa)). The region spanning 98–164 (GDCEVNGRRY…GKCCPEWVCD (67 aa)) is the VWFC domain. Positions 194 to 238 (WPNWSTAWGPCSTTCGLGIATRVSNQNRFCQLEIQRRLCLPRPCL) constitute a TSP type-1 domain. N196 is a glycosylation site (N-linked (GlcNAc...) asparagine).

Belongs to the CCN family.

It is found in the secreted. In terms of biological role, may play an important role in modulating bone turnover. Promotes the adhesion of osteoblast cells and inhibits the binding of fibrinogen to integrin receptors. In addition, inhibits osteocalcin production. This Rattus norvegicus (Rat) protein is CCN family member 5 (Ccn5).